The chain runs to 69 residues: DNA-directed RNA polymerase subunit omega (69 aa).

This sequence belongs to the RNA polymerase subunit omega family. As to quaternary structure, the RNAP catalytic core consists of 2 alpha, 1 beta, 1 beta' and 1 omega subunit. When a sigma factor is associated with the core the holoenzyme is formed, which can initiate transcription.

It carries out the reaction RNA(n) + a ribonucleoside 5'-triphosphate = RNA(n+1) + diphosphate. Functionally, promotes RNA polymerase assembly. Latches the N- and C-terminal regions of the beta' subunit thereby facilitating its interaction with the beta and alpha subunits. The protein is DNA-directed RNA polymerase subunit omega of Heliobacterium modesticaldum (strain ATCC 51547 / Ice1).